Reading from the N-terminus, the 270-residue chain is Glutamate racemase (270 aa).

Substrate is bound by residues 15 to 16 (DS) and 47 to 48 (YG). The active-site Proton donor/acceptor is Cys78. 79–80 (NT) lines the substrate pocket. Cys189 acts as the Proton donor/acceptor in catalysis. Substrate is bound at residue 190–191 (TH).

The protein belongs to the aspartate/glutamate racemases family.

It catalyses the reaction L-glutamate = D-glutamate. Its pathway is cell wall biogenesis; peptidoglycan biosynthesis. In terms of biological role, provides the (R)-glutamate required for cell wall biosynthesis. The polypeptide is Glutamate racemase (Syntrophus aciditrophicus (strain SB)).